A 427-amino-acid chain; its full sequence is MHSPLQTQQPEQRCWPMTSTVSEIEEVLPDEDSDRTTLLNGEPLRRRVSGKSPVDEGPRRIFRQQSFGRDIGHAAAETYLITGLSFKLLRYLGVGYRWMTKLLALTCYAMLLMPGFLQVAYSYFFSKQVRRSIVYGDQPRNRLDLYLPSNNDGLKPVVVFVTGGAWIIGYKAWGSLLGMQLAERDIIVACLDYRNFPQGTISDMVTDASQGISFVCNNISAFGGDPNRIYLMGQSAGAHIAACALLEQATKELKGESISWTVSQIKAYFGLSGGYNLYKLVDHFHNRGLYRSIFLSIMEGEESFEKFSPEVRLKDPVVGKAASLLPPIILFHGSSDYSIPCDESKTFTDALQAVGAKAELVLYSGKTHTDLFLQDPLRGGKDELFDDIVSVIHAEDNDGLTKDSLAPPRKRLVPELLLKLAREISPF.

The interval 26–59 (EVLPDEDSDRTTLLNGEPLRRRVSGKSPVDEGPR) is disordered. The next 2 membrane-spanning stretches (helical) occupy residues 102-122 (LLALTCYAMLLMPGFLQVAYS) and 157-177 (VVVFVTGGAWIIGYKAWGSLL). Substrate contacts are provided by residues 163 to 165 (GGA) and 234 to 236 (QSA). Catalysis depends on residues S235, D336, and H368.

It belongs to the AB hydrolase superfamily. Isoprenylcysteine methylesterase family. Expressed in roots, rosette and cauline leaves, stems, flowers and siliques.

Its subcellular location is the endoplasmic reticulum membrane. The protein resides in the golgi apparatus membrane. It catalyses the reaction [protein]-C-terminal S-[(2E,6E)-farnesyl]-L-cysteine methyl ester + H2O = [protein]-C-terminal S-[(2E,6E)-farnesyl]-L-cysteine + methanol + H(+). Functionally, catalyzes the demethylation of isoprenylcysteine methylesters. In vitro, is specific for N-acetyl-S-farnesyl-L-cysteine methyl ester (AFCme) and has low activity toward N-acetyl-S-geranyl-L-cysteine methyl ester (AGCme). Acts as a positive regulator of ABA signaling. May be involved in the demethylation and inactivation of isoprenylated negative regulators of abscisic acid (ABA) signaling. Carboxyl methylation is a reversible and potentially regulated step in the post-translational modification of prenylated proteins. The protein is Isoprenylcysteine alpha-carbonyl methylesterase ICME of Arabidopsis thaliana (Mouse-ear cress).